We begin with the raw amino-acid sequence, 129 residues long: Glycine cleavage system H protein (129 aa).

In terms of domain architecture, Lipoyl-binding spans 24–106; it reads LLKIGVSEFA…IGEGWLVILK (83 aa). N6-lipoyllysine is present on K65.

It belongs to the GcvH family. As to quaternary structure, the glycine cleavage system is composed of four proteins: P, T, L and H. (R)-lipoate serves as cofactor.

Its function is as follows. The glycine cleavage system catalyzes the degradation of glycine. The H protein shuttles the methylamine group of glycine from the P protein to the T protein. This chain is Glycine cleavage system H protein, found in Prochlorococcus marinus (strain MIT 9312).